The following is a 430-amino-acid chain: MKETIEFLIDTVEARQVLDSRGNPTVEAEVFLECGASGRAIVPSGASTGAHEAHELRDGGSKYMGKGVLNAVNKIHETISPALCGLSSLDQIAVDKLMIEIDGTPNKSNLGANSILAVSLATARASANALDIPLYRYLGDPLSNLLPVPLMNVINGGAHAPNSLDFQEFMLVPHGVNNFSESLRMGTEIFHSLKSLLDQKGLSTAVGDEGGFAPNLSSSEEAGDLLLEAIQKAGFKPGEQVSLALDAASTEFYSDGIYKYEGKSLNSSEMISYLSRLVSNYPIVSIEDGLAEDDWEGWSELNKELGNKVQLVGDDLFVTNTERLRKGIMEKSANSILIKVNQIGTLTETLEAIELAKMSGFTSVISHRSGETEDTTIADLSVATRSGQIKTGSLSRSERIAKYNRLLKIEEELGNQARFAGALGLGPKNI.

Glutamine 167 contributes to the (2R)-2-phosphoglycerate binding site. Glutamate 209 serves as the catalytic Proton donor. Mg(2+) contacts are provided by aspartate 246, glutamate 287, and aspartate 314. (2R)-2-phosphoglycerate contacts are provided by lysine 339, arginine 368, serine 369, and lysine 390. Lysine 339 acts as the Proton acceptor in catalysis.

It belongs to the enolase family. Mg(2+) serves as cofactor.

Its subcellular location is the cytoplasm. It is found in the secreted. The protein localises to the cell surface. It catalyses the reaction (2R)-2-phosphoglycerate = phosphoenolpyruvate + H2O. Its pathway is carbohydrate degradation; glycolysis; pyruvate from D-glyceraldehyde 3-phosphate: step 4/5. Catalyzes the reversible conversion of 2-phosphoglycerate (2-PG) into phosphoenolpyruvate (PEP). It is essential for the degradation of carbohydrates via glycolysis. This Prochlorococcus marinus (strain MIT 9301) protein is Enolase.